Consider the following 135-residue polypeptide: Helix-loop-helix protein 2 (135 aa).

Positions 1-81 (MMLSPDQAAD…RRATAKYRSA (81 aa)) are disordered. The segment covering 10–21 (DSDHPSSTHSDP) has biased composition (basic and acidic residues). A compositionally biased stretch (basic residues) spans 68–81 (KRRRRRATAKYRSA). The 53-residue stretch at 77 to 129 (KYRSAHATRERIRVEAFNLAFAELRKLLPTLPPDKKLSKIEILRLAICYISYL) folds into the bHLH domain.

In terms of assembly, homodimer. Interacts and may form heterodimers with STAT3. In terms of tissue distribution, expressed in developing neurons. Transiently expressed in the cerebellum during postnatal development, exclusively in the premigratory zone of the external granule layer where postmitotic neurons undergo initial stages of neuronal differentiation. Expression is not detected in mature neurons. Expressed in the anterior lobe of the adult pituitary.

It is found in the nucleus. Functionally, transcription factor which binds the E box motif 5'-CA[TC][AG]TG-3'. Involved in regulating energy expenditure, body mass, voluntary physical activity, mating behavior and reproductive longevity, acting through the hypothalamic-pituitary-gonadal axis. Acts as a transcriptional activator of target genes, including Ndn, Pcsk1, Mc4r. Is also a transcriptional activator of KISS1. May act centrally to regulate function of both white and brown adipose tissue. Together with NHLH1, required to maintain migration and survival of cells in the anterior extramural migration stream (aes), which forms the precerebellar nuclei. Also, in concert with Nhlh1, may determine fate of gonadotropin releasing hormone-1 (GnRH-1) neurons. This chain is Helix-loop-helix protein 2 (Nhlh2), found in Mus musculus (Mouse).